The following is a 344-amino-acid chain: Protein POLAR LOCALIZATION DURING ASYMMETRIC DIVISION AND REDISTRIBUTION (344 aa).

The residue at position 19 (T19) is a Phosphothreonine; by ASK7. The residue at position 79 (S79) is a Phosphoserine; by ASK7. Phosphothreonine; by ASK7 is present on residues T84 and T86. Phosphoserine; by ASK7 is present on residues S91 and S94. Phosphothreonine; by ASK7 occurs at positions 193, 217, and 233. Position 235 is a phosphoserine; by ASK7 (S235). Positions 262-297 (LETRQQEELVKLETALNRVERRLQEKETEVSWWKDA) form a coiled coil. 5 positions are modified to phosphoserine; by ASK7: S308, S309, S320, S321, and S336.

As to quaternary structure, component of a complex made of POLAR, BASL, ASK7/BIN2 and ASK3/SK12. Interacts with BASL, ASK7/BIN2 and ASK3/SK12. Post-translationally, phosphorylation by ASK7/BIN2 is increases turnover. As to expression, expressed in stomatal lineage cells with asymmetric division potential.

Its subcellular location is the cytoplasm. The protein localises to the cell cortex. Its function is as follows. Regulates asymmetric cell division (ACD), especially in stomatal-lineage cells. Acts as a stomatal lineage scaffold which regulates subcellular localization and transient polarization of kinases (e.g. ASK7/BIN2 and ASK3/SK12) involved in ACD in a BASL-dependent manner. Promotes the differentiation of both pavement cells and stomata. This chain is Protein POLAR LOCALIZATION DURING ASYMMETRIC DIVISION AND REDISTRIBUTION, found in Arabidopsis thaliana (Mouse-ear cress).